We begin with the raw amino-acid sequence, 205 residues long: MSSMNPEYDYLFKLLLIGDSGVGKSCLLLRFADDTYTESYISTIGVDFKIRTIELDGKTIKLQIWDTAGQERFRTITSSYYRGAHGIIVVYDVTDQESFNNVKQWLQEIDRYASENVNKLLVGNKCDLTTKKVVDYTTAKEFADSLGIPFLETSAKNATNVEQSFMTMAAEIKKRMGPGATAGGAEKSNVKIQSTPVKQSGGGCC.

S2 is subject to N-acetylserine. S20, G21, G23, K24, S25, C26, E38, and T43 together coordinate GTP. S25 is a binding site for Mg(2+). Residues 34-48 (DTYTESYISTIGVDF) carry the Switch 1 motif. Residue T43 participates in Mg(2+) binding. Residues K49 and K61 each participate in a glycyl lysine isopeptide (Lys-Gly) (interchain with G-Cter in ubiquitin) cross-link. D66 provides a ligand contact to Mg(2+). The Switch 2 motif lies at 66–83 (DTAGQERFRTITSSYYRG). Residues G69, N124, K125, D127, A155, and K156 each coordinate GTP. Residues 178–205 (PGATAGGAEKSNVKIQSTPVKQSGGGCC) form a disordered region. A Phosphoserine modification is found at S194. S-geranylgeranyl cysteine attachment occurs at residues C204 and C205.

This sequence belongs to the small GTPase superfamily. Rab family. May interact with YIPF5. Interacts with C9orf72; the interaction mediates recruitment of RAB1A to the ATG1/ULK1 kinase complex. Interacts with GDI1; this promotes dissociation from membranes. Mg(2+) is required as a cofactor. Post-translationally, phosphorylated by CDK1 kinase during mitosis. Ubiquitinated via 'Lys-11'-linked ubiquitination on Lys-49 and Lys-61; impairing the recruitment of guanosine diphosphate (GDP) dissociation inhibitor 1/GDI1.

The protein localises to the golgi apparatus. It localises to the endoplasmic reticulum. The protein resides in the early endosome. It is found in the cytoplasm. Its subcellular location is the cytosol. The protein localises to the membrane. It localises to the melanosome. The enzyme catalyses GTP + H2O = GDP + phosphate + H(+). Regulated by guanine nucleotide exchange factors (GEFs) which promote the exchange of bound GDP for free GTP. Regulated by GTPase activating proteins (GAPs) which increase the GTP hydrolysis activity. Inhibited by GDP dissociation inhibitors (GDIs). Its function is as follows. The small GTPases Rab are key regulators of intracellular membrane trafficking, from the formation of transport vesicles to their fusion with membranes. Rabs cycle between an inactive GDP-bound form and an active GTP-bound form that is able to recruit to membranes different sets of downstream effectors directly responsible for vesicle formation, movement, tethering and fusion. RAB1A regulates vesicular protein transport from the endoplasmic reticulum (ER) to the Golgi compartment and on to the cell surface, and plays a role in IL-8 and growth hormone secretion. Required to modulate the compacted morphology of the Golgi. Regulates the level of CASR present at the cell membrane. Plays a role in cell adhesion and cell migration, via its role in protein trafficking. Plays a role in autophagosome assembly and cellular defense reactions against pathogenic bacteria. Plays a role in microtubule-dependent protein transport by early endosomes and in anterograde melanosome transport. The sequence is that of Ras-related protein Rab-1A (RAB1A) from Canis lupus familiaris (Dog).